Consider the following 557-residue polypeptide: MARSKIVKHIFVTGGVVSSLGKGILSASLGALLKSRGLRVAIQKYDPYINVDPGTMSPYQHGEVYVTDDGAETDLDLGHYERFLDEATSRASNMTMGRIYKTVLDNERRGDYLGGTVQVVPHVIDEIKARMLDLAKKGSFDVVITEIGGTVGDIESLPFLEAMRQLKLQLGSKNLVNIHLTLVPYIKSAAELKTKPTQHSVKMLLEIGIQPDILVCRSEHPLSKDIKHKIGLFCNLSDSDVVGLCDAETIYEVPLVLHEEKIDSLVLKKLMLKSPKPADIKDWKDFSGKVKFPKDGVVEIGVCGKYTKYPDAYKSIVESFIHAGAANNVKVKVRWMHSEDLEQKDCKVNEMLQGISGILVAPGFGERGIEGKIEIVKIARERNIPFFGICLGMQCATIEYARNVCGMEGAHSTEFVKKTKYPVIDLMEHQRSVKQKGGTMRLGSYPCILEENTNAFAAYGKNLINERHRHRYEFNNQFKEELSAKGLVIAGASPDGELVEIIELKGHRWFVGVQFHPELKSRVHKPHPLFISFVAEAKKFRDEMAVHHYETSSVETV.

The tract at residues 1-272 (MARSKIVKHI…DSLVLKKLML (272 aa)) is amidoligase domain. Ser-18 is a CTP binding site. Ser-18 is a binding site for UTP. An ATP-binding site is contributed by 19-24 (SLGKGI). Tyr-59 contributes to the L-glutamine binding site. Asp-76 serves as a coordination point for ATP. Mg(2+) contacts are provided by Asp-76 and Glu-146. Residues 153 to 155 (DIE), 193 to 198 (KTKPTQ), and Lys-229 contribute to the CTP site. Residues 193-198 (KTKPTQ) and Lys-229 each bind UTP. Residues 299-543 (EIGVCGKYTK…VAEAKKFRDE (245 aa)) enclose the Glutamine amidotransferase type-1 domain. Gly-363 lines the L-glutamine pocket. Cys-390 acts as the Nucleophile; for glutamine hydrolysis in catalysis. L-glutamine-binding positions include 391 to 394 (LGMQ), Glu-414, and Arg-471. Active-site residues include His-516 and Glu-518.

Belongs to the CTP synthase family. In terms of assembly, homotetramer.

It catalyses the reaction UTP + L-glutamine + ATP + H2O = CTP + L-glutamate + ADP + phosphate + 2 H(+). The enzyme catalyses L-glutamine + H2O = L-glutamate + NH4(+). It carries out the reaction UTP + NH4(+) + ATP = CTP + ADP + phosphate + 2 H(+). The protein operates within pyrimidine metabolism; CTP biosynthesis via de novo pathway; CTP from UDP: step 2/2. Allosterically activated by GTP, when glutamine is the substrate; GTP has no effect on the reaction when ammonia is the substrate. The allosteric effector GTP functions by stabilizing the protein conformation that binds the tetrahedral intermediate(s) formed during glutamine hydrolysis. Inhibited by the product CTP, via allosteric rather than competitive inhibition. Functionally, catalyzes the ATP-dependent amination of UTP to CTP with either L-glutamine or ammonia as the source of nitrogen. Regulates intracellular CTP levels through interactions with the four ribonucleotide triphosphates. The sequence is that of CTP synthase from Chloroherpeton thalassium (strain ATCC 35110 / GB-78).